Here is a 115-residue protein sequence, read N- to C-terminus: Large ribosomal subunit protein uL18 (115 aa).

Belongs to the universal ribosomal protein uL18 family. Part of the 50S ribosomal subunit; part of the 5S rRNA/L5/L18/L25 subcomplex. Contacts the 5S and 23S rRNAs.

Its function is as follows. This is one of the proteins that bind and probably mediate the attachment of the 5S RNA into the large ribosomal subunit, where it forms part of the central protuberance. The protein is Large ribosomal subunit protein uL18 of Marinobacter nauticus (strain ATCC 700491 / DSM 11845 / VT8) (Marinobacter aquaeolei).